The following is a 1200-amino-acid chain: ATP-dependent helicase/deoxyribonuclease subunit B (1200 aa).

It belongs to the helicase family. AddB/RexB type 2 subfamily. As to quaternary structure, heterodimer of AddA and RexB. Requires Mg(2+) as cofactor.

Functionally, the heterodimer acts as both an ATP-dependent DNA helicase and an ATP-dependent, dual-direction single-stranded exonuclease. Recognizes the chi site generating a DNA molecule suitable for the initiation of homologous recombination. This subunit has 5' -&gt; 3' nuclease activity but not helicase activity. This Lactiplantibacillus plantarum (strain ATCC BAA-793 / NCIMB 8826 / WCFS1) (Lactobacillus plantarum) protein is ATP-dependent helicase/deoxyribonuclease subunit B.